The primary structure comprises 308 residues: tRNA pseudouridine synthase B (308 aa).

Catalysis depends on Asp47, which acts as the Nucleophile.

This sequence belongs to the pseudouridine synthase TruB family. Type 1 subfamily.

The catalysed reaction is uridine(55) in tRNA = pseudouridine(55) in tRNA. Its function is as follows. Responsible for synthesis of pseudouridine from uracil-55 in the psi GC loop of transfer RNAs. The polypeptide is tRNA pseudouridine synthase B (Xanthomonas campestris pv. campestris (strain 8004)).